The sequence spans 215 residues: Kunitz trypsin inhibitor 4 (215 aa).

Residues 1-28 (MTKTTKTMNPKFYLVLALTAVLASNAYG) form the signal peptide. Cystine bridges form between C66/C112 and C165/C176. Residue N206 is glycosylated (N-linked (GlcNAc...) asparagine).

Belongs to the protease inhibitor I3 (leguminous Kunitz-type inhibitor) family. As to expression, expressed in roots.

Its subcellular location is the endoplasmic reticulum. Its function is as follows. Exhibits Kunitz trypsin protease inhibitor activity. Involved in modulating programmed cell death (PCD) in plant-pathogen interactions. Can inhibit both serine proteases and cysteine proteases. May be involved in the modulation of the proteases that participate in the hydrolysis of dietary proteins in the gut of spider mites. This chain is Kunitz trypsin inhibitor 4, found in Arabidopsis thaliana (Mouse-ear cress).